Consider the following 110-residue polypeptide: uncharacterized protein (110 aa).

The next 3 helical transmembrane spans lie at 32–52 (VLNV…ALVP), 57–77 (YTHM…CICI), and 90–110 (FLAS…TFVI).

It localises to the membrane. Its function is as follows. May play a role in proper chromosome segregation. Suppresses the high-frequency loss of mini-chromosomes when overexpressed, and this suppression is completely dependent on silencing protein SIR4. This is an uncharacterized protein from Saccharomyces cerevisiae (strain ATCC 204508 / S288c) (Baker's yeast).